We begin with the raw amino-acid sequence, 196 residues long: DnaA initiator-associating protein DiaA (196 aa).

Residues 34 to 196 form the SIS domain; sequence MVQSLLNGNK…DNTLFPHQND (163 aa).

The protein belongs to the SIS family. DiaA subfamily. As to quaternary structure, homotetramer; dimer of dimers.

Its function is as follows. Required for the timely initiation of chromosomal replication via direct interactions with the DnaA initiator protein. The sequence is that of DnaA initiator-associating protein DiaA from Pectobacterium carotovorum subsp. carotovorum (strain PC1).